We begin with the raw amino-acid sequence, 122 residues long: Large ribosomal subunit protein uL14 (122 aa).

The protein belongs to the universal ribosomal protein uL14 family. In terms of assembly, part of the 50S ribosomal subunit. Forms a cluster with proteins L3 and L19. In the 70S ribosome, L14 and L19 interact and together make contacts with the 16S rRNA in bridges B5 and B8.

Its function is as follows. Binds to 23S rRNA. Forms part of two intersubunit bridges in the 70S ribosome. This chain is Large ribosomal subunit protein uL14, found in Marinobacter nauticus (strain ATCC 700491 / DSM 11845 / VT8) (Marinobacter aquaeolei).